Reading from the N-terminus, the 397-residue chain is Mannitol-1-phosphate 5-dehydrogenase (397 aa).

9–20 (AVHFGAGNIGRG) contacts NAD(+). Lys-220 is a catalytic residue.

The protein belongs to the mannitol dehydrogenase family. As to quaternary structure, monomer.

It catalyses the reaction D-mannitol 1-phosphate + NAD(+) = beta-D-fructose 6-phosphate + NADH + H(+). Catalyzes the NAD(H)-dependent interconversion of D-fructose 6-phosphate and D-mannitol 1-phosphate in the mannitol metabolic pathway. The sequence is that of Mannitol-1-phosphate 5-dehydrogenase from Podospora anserina (strain S / ATCC MYA-4624 / DSM 980 / FGSC 10383) (Pleurage anserina).